The sequence spans 668 residues: Threonine--tRNA ligase (668 aa).

One can recognise a TGS domain in the interval 1 to 64 (MSEAIFLTFP…ADGKIEIITR (64 aa)). A catalytic region spans residues 245–553 (DHRKLGREMD…LIENFAGHLP (309 aa)). Zn(2+)-binding residues include Cys347, His398, and His530.

Belongs to the class-II aminoacyl-tRNA synthetase family. In terms of assembly, homodimer. It depends on Zn(2+) as a cofactor.

The protein localises to the cytoplasm. It catalyses the reaction tRNA(Thr) + L-threonine + ATP = L-threonyl-tRNA(Thr) + AMP + diphosphate + H(+). Its function is as follows. Catalyzes the attachment of threonine to tRNA(Thr) in a two-step reaction: L-threonine is first activated by ATP to form Thr-AMP and then transferred to the acceptor end of tRNA(Thr). Also edits incorrectly charged L-seryl-tRNA(Thr). The chain is Threonine--tRNA ligase from Rhizobium leguminosarum bv. trifolii (strain WSM2304).